The chain runs to 118 residues: Mediator of RNA polymerase II transcription subunit 11 (118 aa).

Belongs to the Mediator complex subunit 11 family. Component of the Mediator complex.

The protein resides in the nucleus. Component of the Mediator complex, a coactivator involved in the regulated transcription of nearly all RNA polymerase II-dependent genes. Mediator functions as a bridge to convey information from gene-specific regulatory proteins to the basal RNA polymerase II transcription machinery. Mediator is recruited to promoters by direct interactions with regulatory proteins and serves as a scaffold for the assembly of a functional pre-initiation complex with RNA polymerase II and the general transcription factors. In Xenopus tropicalis (Western clawed frog), this protein is Mediator of RNA polymerase II transcription subunit 11 (med11).